A 102-amino-acid chain; its full sequence is Small ribosomal subunit protein uS10 (102 aa).

Belongs to the universal ribosomal protein uS10 family. As to quaternary structure, part of the 30S ribosomal subunit.

In terms of biological role, involved in the binding of tRNA to the ribosomes. This Gluconobacter oxydans (strain 621H) (Gluconobacter suboxydans) protein is Small ribosomal subunit protein uS10.